We begin with the raw amino-acid sequence, 796 residues long: Disintegrin and metalloproteinase domain-containing protein B (796 aa).

Positions 1-23 are cleaved as a signal peptide; it reads MKALSCLLAVIATAGSLFQHVDA. Residues 24–706 are Extracellular-facing; the sequence is RSHARDRLNN…VSDWVSRHKP (683 aa). Asn33, Asn226, Asn313, and Asn407 each carry an N-linked (GlcNAc...) asparagine glycan. Positions 271 to 510 constitute a Peptidase M12B domain; it reads RVALIGVVAD…HSILTNCLTT (240 aa). Intrachain disulfides connect Cys395-Cys495, Cys448-Cys459, and Cys580-Cys600. His431 contributes to the Zn(2+) binding site. Glu432 is a catalytic residue. Zn(2+)-binding residues include His435 and His441. Residues 519-608 form the Disintegrin domain; sequence GQQCGNGIVE…DCPRDTHSKN (90 aa). The chain crosses the membrane as a helical span at residues 707-727; that stretch reads IVIGVAVGVGCLLLLAILSCI. The Cytoplasmic portion of the chain corresponds to 728-796; it reads CGRSKKRRPR…PGRMPSTRYA (69 aa). Positions 737–796 are disordered; the sequence is RNRKMAPINMRPMPPVYNGWTGPPPNAESPGGHPQYNHVPPPINAPPPAYPGRMPSTRYA. Residues 775–786 are compositionally biased toward pro residues; it reads VPPPINAPPPAY.

Zn(2+) is required as a cofactor.

The protein localises to the membrane. Probable zinc protease. This chain is Disintegrin and metalloproteinase domain-containing protein B (ADM-B), found in Arthroderma otae (strain ATCC MYA-4605 / CBS 113480) (Microsporum canis).